Consider the following 835-residue polypeptide: U-box domain-containing protein 35 (835 aa).

Disordered stretches follow at residues M1–V22, V177–R303, and E410–T457. A compositionally biased stretch (pro residues) spans L10–S19. Residues R195 to D218 are compositionally biased toward low complexity. Polar residues predominate over residues S269–W282. Composition is skewed to basic and acidic residues over residues R285 to A295 and E410 to E455. Residues Q340–G459 are a coiled coil. The Protein kinase domain maps to F480–L745. ATP-binding positions include I486 to V494 and K507. The Proton acceptor role is filled by D602. A U-box domain is found at Q765–R835.

This sequence belongs to the protein kinase superfamily. Ser/Thr protein kinase family.

The catalysed reaction is L-seryl-[protein] + ATP = O-phospho-L-seryl-[protein] + ADP + H(+). It carries out the reaction L-threonyl-[protein] + ATP = O-phospho-L-threonyl-[protein] + ADP + H(+). It catalyses the reaction S-ubiquitinyl-[E2 ubiquitin-conjugating enzyme]-L-cysteine + [acceptor protein]-L-lysine = [E2 ubiquitin-conjugating enzyme]-L-cysteine + N(6)-ubiquitinyl-[acceptor protein]-L-lysine.. It functions in the pathway protein modification; protein ubiquitination. In terms of biological role, functions as an E3 ubiquitin ligase. This Arabidopsis thaliana (Mouse-ear cress) protein is U-box domain-containing protein 35 (PUB35).